Reading from the N-terminus, the 287-residue chain is ATP synthase gamma chain (287 aa).

Belongs to the ATPase gamma chain family. F-type ATPases have 2 components, CF(1) - the catalytic core - and CF(0) - the membrane proton channel. CF(1) has five subunits: alpha(3), beta(3), gamma(1), delta(1), epsilon(1). CF(0) has three main subunits: a, b and c.

Its subcellular location is the cell inner membrane. Functionally, produces ATP from ADP in the presence of a proton gradient across the membrane. The gamma chain is believed to be important in regulating ATPase activity and the flow of protons through the CF(0) complex. The sequence is that of ATP synthase gamma chain from Pectobacterium carotovorum subsp. carotovorum (strain PC1).